We begin with the raw amino-acid sequence, 475 residues long: Ribulose bisphosphate carboxylase large chain (475 aa).

Residues 1 to 2 (MV) constitute a propeptide that is removed on maturation. An N-acetylproline modification is found at proline 3. Lysine 14 carries the N6,N6,N6-trimethyllysine modification. Substrate-binding residues include asparagine 123 and threonine 173. Lysine 175 (proton acceptor) is an active-site residue. Residue lysine 177 participates in substrate binding. Mg(2+)-binding residues include lysine 201, aspartate 203, and glutamate 204. Lysine 201 carries the N6-carboxylysine modification. The active-site Proton acceptor is histidine 294. Residues arginine 295, histidine 327, and serine 379 each contribute to the substrate site.

This sequence belongs to the RuBisCO large chain family. Type I subfamily. Heterohexadecamer of 8 large chains and 8 small chains. Requires Mg(2+) as cofactor.

It localises to the plastid. The protein resides in the chloroplast. It catalyses the reaction 2 (2R)-3-phosphoglycerate + 2 H(+) = D-ribulose 1,5-bisphosphate + CO2 + H2O. The enzyme catalyses D-ribulose 1,5-bisphosphate + O2 = 2-phosphoglycolate + (2R)-3-phosphoglycerate + 2 H(+). In terms of biological role, ruBisCO catalyzes two reactions: the carboxylation of D-ribulose 1,5-bisphosphate, the primary event in carbon dioxide fixation, as well as the oxidative fragmentation of the pentose substrate in the photorespiration process. Both reactions occur simultaneously and in competition at the same active site. This Dunaliella tertiolecta (Green alga) protein is Ribulose bisphosphate carboxylase large chain.